The sequence spans 515 residues: Maturase K (515 aa).

It belongs to the intron maturase 2 family. MatK subfamily.

Its subcellular location is the plastid. The protein resides in the chloroplast. Usually encoded in the trnK tRNA gene intron. Probably assists in splicing its own and other chloroplast group II introns. The sequence is that of Maturase K from Picea mariana (Black spruce).